A 461-amino-acid chain; its full sequence is Bifunctional protein GlmU (461 aa).

Residues 1-232 (MNLQIIILAA…SFEVQGINNR (232 aa)) form a pyrophosphorylase region. Residues 8 to 11 (LAAG), lysine 22, glutamine 73, and 78 to 79 (GT) contribute to the UDP-N-acetyl-alpha-D-glucosamine site. Residue aspartate 102 coordinates Mg(2+). Positions 142, 157, and 230 each coordinate UDP-N-acetyl-alpha-D-glucosamine. A Mg(2+)-binding site is contributed by asparagine 230. The linker stretch occupies residues 233–253 (QQLQQLERIWQQRAANQLMEK). Residues 254–461 (GATLADANRF…WKRPVKRERD (208 aa)) are N-acetyltransferase. Residues arginine 336 and lysine 354 each contribute to the UDP-N-acetyl-alpha-D-glucosamine site. The Proton acceptor role is filled by histidine 366. Positions 369 and 380 each coordinate UDP-N-acetyl-alpha-D-glucosamine. Acetyl-CoA is bound by residues alanine 383, 389–390 (NY), serine 408, and alanine 426.

The protein in the N-terminal section; belongs to the N-acetylglucosamine-1-phosphate uridyltransferase family. In the C-terminal section; belongs to the transferase hexapeptide repeat family. Homotrimer. The cofactor is Mg(2+).

The protein localises to the cytoplasm. The catalysed reaction is alpha-D-glucosamine 1-phosphate + acetyl-CoA = N-acetyl-alpha-D-glucosamine 1-phosphate + CoA + H(+). It catalyses the reaction N-acetyl-alpha-D-glucosamine 1-phosphate + UTP + H(+) = UDP-N-acetyl-alpha-D-glucosamine + diphosphate. It participates in nucleotide-sugar biosynthesis; UDP-N-acetyl-alpha-D-glucosamine biosynthesis; N-acetyl-alpha-D-glucosamine 1-phosphate from alpha-D-glucosamine 6-phosphate (route II): step 2/2. Its pathway is nucleotide-sugar biosynthesis; UDP-N-acetyl-alpha-D-glucosamine biosynthesis; UDP-N-acetyl-alpha-D-glucosamine from N-acetyl-alpha-D-glucosamine 1-phosphate: step 1/1. The protein operates within bacterial outer membrane biogenesis; LPS lipid A biosynthesis. Functionally, catalyzes the last two sequential reactions in the de novo biosynthetic pathway for UDP-N-acetylglucosamine (UDP-GlcNAc). The C-terminal domain catalyzes the transfer of acetyl group from acetyl coenzyme A to glucosamine-1-phosphate (GlcN-1-P) to produce N-acetylglucosamine-1-phosphate (GlcNAc-1-P), which is converted into UDP-GlcNAc by the transfer of uridine 5-monophosphate (from uridine 5-triphosphate), a reaction catalyzed by the N-terminal domain. In Legionella pneumophila (strain Corby), this protein is Bifunctional protein GlmU.